Consider the following 742-residue polypeptide: Feeding circuit activating peptides (742 aa).

Positions 1–22 (MTFAASFRALLCVLFCAALVHC) are cleaved as a signal peptide. The propeptide occupies 23–98 (KTRTKRYVPH…YGALADRDVD (76 aa)). The propeptide at 117 to 131 (GSLDAIPQDTDASSD) is connecting peptide. 20 consecutive propeptides follow at residues 164–168 (GSGAE), 202–220 (RGTG…PWGS), 236–253 (DTEL…TEVN), 271–275 (SGEAG), 293–297 (ADDQG), 315–321 (FDNSAGE), 339–341 (AGD), 359–366 (FDNDISGQ), 384–388 (SDQDN), 406–410 (ADDDG), 428–432 (ADEDD), 450–454 (GDEDD), 472–476 (ADEDD), 494–498 (SDEDD), 516–520 (SDEDD), 538–542 (ADEDD), 560–564 (NSPGL), 582–592 (NNEYYSGAENE), 610–614 (DQPGE), and 647–742 (NSAD…AGQM).

Expressed in pleural, pedal, abdominal, buccal and cerebral ganglia.

The protein localises to the secreted. Initiates organized rhythmic motor output of feeding circuit. The polypeptide is Feeding circuit activating peptides (Aplysia californica (California sea hare)).